The chain runs to 499 residues: U4/U6 small nuclear ribonucleoprotein Prp31 (499 aa).

The segment at 1–37 (MSLADELLADLEEAAEEEEGGSYGEEEEEPAIEDVQE) is disordered. Over residues 7-37 (LLADLEEAAEEEEGGSYGEEEEEPAIEDVQE) the composition is skewed to acidic residues. Coiled coils occupy residues 85–120 (EAAP…KYSK) and 181–215 (EEEL…MSFI). In terms of domain architecture, Nop spans 215-333 (IAPNLSIIIG…IERKFDKWQE (119 aa)). The disordered stretch occupies residues 334-357 (PPPVKQVKPLPAPLDGQRKKRGGR). A Nuclear localization signal (NLS) motif is present at residues 351–364 (RKKRGGRRYRKMKE). A phosphoserine mark is found at S379, S395, and S432. K438 is subject to N6-acetyllysine. S439 bears the Phosphoserine mark. Position 440 is a phosphothreonine (T440). Residue S450 is modified to Phosphoserine. T455 carries the phosphothreonine modification. Glycyl lysine isopeptide (Lys-Gly) (interchain with G-Cter in SUMO2) cross-links involve residues K471 and K478.

Belongs to the PRP31 family. Identified in the spliceosome B complex. Component of the U4/U6-U5 tri-snRNP complex composed of the U4, U6 and U5 snRNAs and at least PRPF3, PRPF4, PRPF6, PRPF8, PRPF31, SNRNP200, TXNL4A, SNRNP40, DDX23, CD2BP2, PPIH, SNU13, EFTUD2, SART1 and USP39. Interacts with a complex formed by SNU13 and U4 snRNA, but not with SNU13 or U4 snRNA alone. The complex formed by SNU13 and PRPF31 also binds U4atac snRNA, a characteristic component of specific, less abundant spliceosomal complexes. Interacts with PRPF6/U5 snRNP-associated 102 kDa protein. Component of some MLL1/MLL complex, at least composed of the core components KMT2A/MLL1, ASH2L, HCFC1/HCF1, WDR5 and RBBP5, as well as the facultative components BACC1, CHD8, E2F6, HSP70, INO80C, KANSL1, LAS1L, MAX, MCRS1, MGA, KAT8/MOF, PELP1, PHF20, PRP31, RING2, RUVB1/TIP49A, RUVB2/TIP49B, SENP3, TAF1, TAF4, TAF6, TAF7, TAF9 and TEX10. Interacts (via its NLS) with CTNNBL1. Interacts with USH1G. Phosphorylated by PRP4K during spliceosome assembly. As to expression, ubiquitously expressed.

The protein resides in the nucleus. The protein localises to the nucleus speckle. It is found in the cajal body. Its function is as follows. Involved in pre-mRNA splicing as component of the spliceosome. Required for the assembly of the U4/U5/U6 tri-snRNP complex, one of the building blocks of the spliceosome. This chain is U4/U6 small nuclear ribonucleoprotein Prp31, found in Homo sapiens (Human).